The primary structure comprises 358 residues: G-protein coupled receptor 62 (358 aa).

Topologically, residues 1–17 (MANGSGLSVTELAGSVG) are extracellular. N-linked (GlcNAc...) asparagine glycosylation occurs at Asn-3. Residues 18 to 38 (FILAVLVEVGAVLGNGTLLVV) traverse the membrane as a helical segment. Residues 39-53 (VLRTPDLQDAFYLAH) are Cytoplasmic-facing. A helical transmembrane segment spans residues 54–74 (LCVVDLLAAASIMPLGLLAAP). Residues 75–89 (PGLGTVPLDPSSCRA) are Extracellular-facing. The chain crosses the membrane as a helical span at residues 90–110 (ARFLSAALLPACTLGVAALGL). The Cytoplasmic portion of the chain corresponds to 111–128 (ARYRLIVHPLRPGARPAP). A helical transmembrane segment spans residues 129–149 (ALVLTAVWSAAALLGALSLLG). At 150 to 176 (PPPAPPPAPARCSVLAGGLGPFRPLWA) the chain is on the extracellular side. The chain crosses the membrane as a helical span at residues 177–197 (MLAFALPALLLLAAYGSIFLV). Over 198-234 (ARRAALRPPRGTRPRSDSLDSRLSFLPPLRPRLLGGK) the chain is Cytoplasmic. Residues 235 to 255 (AALAPALAVGQFAACWLPYGC) traverse the membrane as a helical segment. Residues 256-268 (ACLAPAARAAAAE) are Extracellular-facing. A helical membrane pass occupies residues 269–289 (ATVTWVAYSAFAAHPFLYGLL). Residues 290 to 358 (QRPVRLALGR…RQTPSVSEAT (69 aa)) lie on the Cytoplasmic side of the membrane. Positions 334–358 (VLGPSEAPEQARELARQTPSVSEAT) are disordered.

It belongs to the G-protein coupled receptor 1 family. As to quaternary structure, homodimer. Forms heterodimer with MTNR1B. Interacts with ARRB1 and ARRB2 in a spontaneous and agonist-independent manner; leading to the internalization of GPR62 in the endosomal compartment. In terms of tissue distribution, expressed in the brain and testes. Expressed widely, in the brain, including the cerebral cortex, cerebellum, hippocampus,thalamus and pituitary gland. In the testes, expressed specifically in the germ cells.

The protein resides in the cell membrane. The protein localises to the endosome membrane. In terms of biological role, orphan G-protein coupled receptor. Constitutively activates the G(q/11)/inositol phosphate and the G(s)-alpha/cAMP signaling pathways. Has spontaneous activity for beta-arrestin recruitment. Shows a reciprocal regulatory interaction with the melatonin receptor MTNR1B most likely through receptor heteromerization. This is G-protein coupled receptor 62 (Gpr62) from Mus musculus (Mouse).